Consider the following 280-residue polypeptide: Acetyl-coenzyme A carboxylase carboxyl transferase subunit beta (280 aa).

The 255-residue stretch at 26-280 folds into the CoA carboxyltransferase N-terminal domain; it reads LWQKCPRCGE…TKLLAWHSQK (255 aa). Residues cysteine 30, cysteine 33, cysteine 49, and cysteine 52 each coordinate Zn(2+). Residues 30–52 form a C4-type zinc finger; sequence CPRCGEIIFNKELEKNFKVCPKC.

Belongs to the AccD/PCCB family. As to quaternary structure, acetyl-CoA carboxylase is a heterohexamer composed of biotin carboxyl carrier protein (AccB), biotin carboxylase (AccC) and two subunits each of ACCase subunit alpha (AccA) and ACCase subunit beta (AccD). Zn(2+) serves as cofactor.

The protein resides in the cytoplasm. The catalysed reaction is N(6)-carboxybiotinyl-L-lysyl-[protein] + acetyl-CoA = N(6)-biotinyl-L-lysyl-[protein] + malonyl-CoA. It participates in lipid metabolism; malonyl-CoA biosynthesis; malonyl-CoA from acetyl-CoA: step 1/1. Component of the acetyl coenzyme A carboxylase (ACC) complex. Biotin carboxylase (BC) catalyzes the carboxylation of biotin on its carrier protein (BCCP) and then the CO(2) group is transferred by the transcarboxylase to acetyl-CoA to form malonyl-CoA. This is Acetyl-coenzyme A carboxylase carboxyl transferase subunit beta from Carboxydothermus hydrogenoformans (strain ATCC BAA-161 / DSM 6008 / Z-2901).